The chain runs to 903 residues: E3 ubiquitin-protein ligase DDB_G0292642 (903 aa).

Disordered regions lie at residues 115–137 (FTLPPTTNNNNNNTTNVLESSSD), 167–236 (LLKR…VIGS), 284–366 (VNKT…NNLK), 415–487 (TPSL…TTEI), and 549–576 (DDSEEEEEEEEEEEGEESDSESSSGSEG). Composition is skewed to low complexity over residues 120–130 (TTNNNNNNTTN) and 178–216 (TTTTTTTTTTANNNNTRRNRNNNNNNNNNANGANRTIDT). Positions 217-232 (SSEDDDESISSSDDDI) are enriched in acidic residues. 2 stretches are compositionally biased toward low complexity: residues 287–301 (TSTTSTTTTTTTTTT) and 311–323 (NRNNNNNNNNNNN). Residues 313-352 (NNNNNNNNNNNKRFEIESEEESETDISSEEEENNNNNNNN) are a coiled coil. A compositionally biased stretch (acidic residues) spans 329–345 (ESEEESETDISSEEEEN). The span at 346-364 (NNNNNNNSNNNNNSNNNNN) shows a compositional bias: low complexity. The segment covering 415 to 427 (TPSLRLSSAHLPN) has biased composition (polar residues). Residues 428-443 (TTTTTTTTTTTTTTTT) are compositionally biased toward low complexity. Acidic residues-rich tracts occupy residues 451 to 466 (NDDDESSDSDSSDSEI) and 549 to 568 (DDSEEEEEEEEEEEGEESDS). Residues 542-569 (AELVFEYDDSEEEEEEEEEEEGEESDSE) are a coiled coil. Residues 612 to 832 (EPVECKICYM…NEYPECFDRQ (221 aa)) form a TRIAD supradomain region. Residues Cys-616, Cys-619, Cys-634, His-636, Cys-639, Cys-642, Cys-661, Cys-666, Cys-704, Cys-709, Cys-725, Cys-728, Cys-733, Cys-736, His-741, Cys-746, Cys-782, and Cys-785 each coordinate Zn(2+). An RING-type 1 zinc finger spans residues 616 to 666 (CKICYMEYDQSNEVFTLECDHVYCFDCITEHLRILITEGRVLDISCPHPQC). The IBR-type zinc-finger motif lies at 683-746 (NWLKYQKFSM…GEYSHEGAKC (64 aa)). The segment at 782–811 (CPTCKSHIEKHDGCNHMTCINCQHQFCWLC) adopts an RING-type 2; atypical zinc-finger fold. The active site involves Cys-795. Zn(2+) is bound by residues Cys-800, Cys-803, Cys-808, Cys-811, His-819, and Cys-828. Residues 864–884 (TAAFTVGAPLLLIGGAVLLCV) traverse the membrane as a helical segment.

It belongs to the RBR family. RNF14 subfamily.

The protein localises to the membrane. It carries out the reaction [E2 ubiquitin-conjugating enzyme]-S-ubiquitinyl-L-cysteine + [acceptor protein]-L-lysine = [E2 ubiquitin-conjugating enzyme]-L-cysteine + [acceptor protein]-N(6)-ubiquitinyl-L-lysine.. Its pathway is protein modification; protein ubiquitination. Functionally, E3 ubiquitin-protein ligase. The protein is E3 ubiquitin-protein ligase DDB_G0292642 of Dictyostelium discoideum (Social amoeba).